A 227-amino-acid polypeptide reads, in one-letter code: Cytochrome c oxidase subunit 2 (227 aa).

Residues 1 to 14 (MAHAVQYGFQDAAA) lie on the Mitochondrial intermembrane side of the membrane. A helical membrane pass occupies residues 15–45 (PIMEELLYFHDHTLMIVFMISSLVLYIISLM). Topologically, residues 46–59 (LSTELTHTSTMDAQ) are mitochondrial matrix. A helical transmembrane segment spans residues 60 to 87 (EVETVWTILPAVILILIALPSLRILYMM). The Mitochondrial intermembrane portion of the chain corresponds to 88 to 227 (DEIETPSLTL…YFEEWLLKTL (140 aa)). Residues His161, Cys196, Glu198, Cys200, His204, and Met207 each contribute to the Cu cation site. Glu198 serves as a coordination point for Mg(2+). Tyr218 carries the phosphotyrosine modification.

Belongs to the cytochrome c oxidase subunit 2 family. In terms of assembly, component of the cytochrome c oxidase (complex IV, CIV), a multisubunit enzyme composed of 14 subunits. The complex is composed of a catalytic core of 3 subunits MT-CO1, MT-CO2 and MT-CO3, encoded in the mitochondrial DNA, and 11 supernumerary subunits COX4I, COX5A, COX5B, COX6A, COX6B, COX6C, COX7A, COX7B, COX7C, COX8 and NDUFA4, which are encoded in the nuclear genome. The complex exists as a monomer or a dimer and forms supercomplexes (SCs) in the inner mitochondrial membrane with NADH-ubiquinone oxidoreductase (complex I, CI) and ubiquinol-cytochrome c oxidoreductase (cytochrome b-c1 complex, complex III, CIII), resulting in different assemblies (supercomplex SCI(1)III(2)IV(1) and megacomplex MCI(2)III(2)IV(2)). Found in a complex with TMEM177, COA6, COX18, COX20, SCO1 and SCO2. Interacts with TMEM177 in a COX20-dependent manner. Interacts with COX20. Interacts with COX16. Cu cation is required as a cofactor.

It is found in the mitochondrion inner membrane. It carries out the reaction 4 Fe(II)-[cytochrome c] + O2 + 8 H(+)(in) = 4 Fe(III)-[cytochrome c] + 2 H2O + 4 H(+)(out). Functionally, component of the cytochrome c oxidase, the last enzyme in the mitochondrial electron transport chain which drives oxidative phosphorylation. The respiratory chain contains 3 multisubunit complexes succinate dehydrogenase (complex II, CII), ubiquinol-cytochrome c oxidoreductase (cytochrome b-c1 complex, complex III, CIII) and cytochrome c oxidase (complex IV, CIV), that cooperate to transfer electrons derived from NADH and succinate to molecular oxygen, creating an electrochemical gradient over the inner membrane that drives transmembrane transport and the ATP synthase. Cytochrome c oxidase is the component of the respiratory chain that catalyzes the reduction of oxygen to water. Electrons originating from reduced cytochrome c in the intermembrane space (IMS) are transferred via the dinuclear copper A center (CU(A)) of subunit 2 and heme A of subunit 1 to the active site in subunit 1, a binuclear center (BNC) formed by heme A3 and copper B (CU(B)). The BNC reduces molecular oxygen to 2 water molecules using 4 electrons from cytochrome c in the IMS and 4 protons from the mitochondrial matrix. The protein is Cytochrome c oxidase subunit 2 (MT-CO2) of Galago senegalensis (Northern lesser bushbaby).